The sequence spans 520 residues: Calcium-dependent protein kinase 25 (520 aa).

Gly-2 carries N-myristoyl glycine lipidation. A disordered region spans residues 31–87 (PLKPQLQDKPPQPMLMNKDDDKTKLNDTHGDPKLLEGKEKPAQKQTSQGQGGRKCSD). The segment covering 47–72 (NKDDDKTKLNDTHGDPKLLEGKEKPA) has biased composition (basic and acidic residues). Positions 132–390 (YNLGSKLGHG…AQQVLCHPWI (259 aa)) constitute a Protein kinase domain. ATP is bound by residues 138-146 (LGHGQFGTT) and Lys-161. The active-site Proton acceptor is the Asp-256. The residue at position 296 (Ser-296) is a Phosphoserine. The segment at 396–426 (APDTPLDTTVLSRLKKFSATDKLKKMALRVI) is autoinhibitory domain. The region spanning 433 to 468 (EEIHELRETFKTIDSGKSGRVTYKELKNGLERFNTN) is the EF-hand 1 domain. Positions 446, 450, 452, 457, 483, 487, 489, and 494 each coordinate Ca(2+). Residues 469 to 505 (LDNSDINSLMQIPTDVHLEDTVDYNEFIEAIVRLRQI) enclose the EF-hand 2; degenerate domain.

The protein belongs to the protein kinase superfamily. Ser/Thr protein kinase family. CDPK subfamily.

It localises to the membrane. The catalysed reaction is L-seryl-[protein] + ATP = O-phospho-L-seryl-[protein] + ADP + H(+). The enzyme catalyses L-threonyl-[protein] + ATP = O-phospho-L-threonyl-[protein] + ADP + H(+). Its activity is regulated as follows. Activated by calcium. Autophosphorylation may play an important role in the regulation of the kinase activity. Its function is as follows. May play a role in signal transduction pathways that involve calcium as a second messenger. The polypeptide is Calcium-dependent protein kinase 25 (CPK25) (Arabidopsis thaliana (Mouse-ear cress)).